Here is a 764-residue protein sequence, read N- to C-terminus: 5-methyltetrahydropteroyltriglutamate--homocysteine methyltransferase (764 aa).

Residues 16–19 (RELK) and Lys-117 contribute to the 5-methyltetrahydropteroyltri-L-glutamate site. L-homocysteine-binding positions include 442–444 (IGS) and Glu-495. L-methionine contacts are provided by residues 442-444 (IGS) and Glu-495. 5-methyltetrahydropteroyltri-L-glutamate-binding positions include 526-527 (RC) and Trp-572. Residue Asp-610 coordinates L-homocysteine. Asp-610 contacts L-methionine. Glu-616 lines the 5-methyltetrahydropteroyltri-L-glutamate pocket. The Zn(2+) site is built by His-652, Cys-654, and Glu-676. The Proton donor role is filled by His-705. Position 737 (Cys-737) interacts with Zn(2+).

It belongs to the vitamin-B12 independent methionine synthase family. It depends on Zn(2+) as a cofactor.

It carries out the reaction 5-methyltetrahydropteroyltri-L-glutamate + L-homocysteine = tetrahydropteroyltri-L-glutamate + L-methionine. It participates in amino-acid biosynthesis; L-methionine biosynthesis via de novo pathway; L-methionine from L-homocysteine (MetE route): step 1/1. Catalyzes the transfer of a methyl group from 5-methyltetrahydrofolate to homocysteine resulting in methionine formation. In Bordetella pertussis (strain Tohama I / ATCC BAA-589 / NCTC 13251), this protein is 5-methyltetrahydropteroyltriglutamate--homocysteine methyltransferase.